The following is a 511-amino-acid chain: Histidine ammonia-lyase (511 aa).

The 5-imidazolinone (Ala-Gly) cross-link spans 142 to 144 (ASG). Residue serine 143 is modified to 2,3-didehydroalanine (Ser).

The protein belongs to the PAL/histidase family. In terms of processing, contains an active site 4-methylidene-imidazol-5-one (MIO), which is formed autocatalytically by cyclization and dehydration of residues Ala-Ser-Gly.

Its subcellular location is the cytoplasm. It carries out the reaction L-histidine = trans-urocanate + NH4(+). It participates in amino-acid degradation; L-histidine degradation into L-glutamate; N-formimidoyl-L-glutamate from L-histidine: step 1/3. The polypeptide is Histidine ammonia-lyase (Rhizobium rhizogenes (strain K84 / ATCC BAA-868) (Agrobacterium radiobacter)).